We begin with the raw amino-acid sequence, 232 residues long: Phosphatidylserine decarboxylase proenzyme (232 aa).

The active-site Schiff-base intermediate with substrate; via pyruvic acid is the Ser190. Ser190 carries the pyruvic acid (Ser); by autocatalysis modification.

It belongs to the phosphatidylserine decarboxylase family. PSD-A subfamily. Heterodimer of a large membrane-associated beta subunit and a small pyruvoyl-containing alpha subunit. Requires pyruvate as cofactor. In terms of processing, is synthesized initially as an inactive proenzyme. Formation of the active enzyme involves a self-maturation process in which the active site pyruvoyl group is generated from an internal serine residue via an autocatalytic post-translational modification. Two non-identical subunits are generated from the proenzyme in this reaction, and the pyruvate is formed at the N-terminus of the alpha chain, which is derived from the carboxyl end of the proenzyme. The post-translation cleavage follows an unusual pathway, termed non-hydrolytic serinolysis, in which the side chain hydroxyl group of the serine supplies its oxygen atom to form the C-terminus of the beta chain, while the remainder of the serine residue undergoes an oxidative deamination to produce ammonia and the pyruvoyl prosthetic group on the alpha chain.

It localises to the cell membrane. It carries out the reaction a 1,2-diacyl-sn-glycero-3-phospho-L-serine + H(+) = a 1,2-diacyl-sn-glycero-3-phosphoethanolamine + CO2. It functions in the pathway phospholipid metabolism; phosphatidylethanolamine biosynthesis; phosphatidylethanolamine from CDP-diacylglycerol: step 2/2. In terms of biological role, catalyzes the formation of phosphatidylethanolamine (PtdEtn) from phosphatidylserine (PtdSer). The sequence is that of Phosphatidylserine decarboxylase proenzyme from Cereibacter sphaeroides (strain ATCC 17023 / DSM 158 / JCM 6121 / CCUG 31486 / LMG 2827 / NBRC 12203 / NCIMB 8253 / ATH 2.4.1.) (Rhodobacter sphaeroides).